A 140-amino-acid chain; its full sequence is ATP synthase epsilon chain (140 aa).

The protein belongs to the ATPase epsilon chain family. In terms of assembly, F-type ATPases have 2 components, CF(1) - the catalytic core - and CF(0) - the membrane proton channel. CF(1) has five subunits: alpha(3), beta(3), gamma(1), delta(1), epsilon(1). CF(0) has three main subunits: a, b and c.

It localises to the cell inner membrane. Produces ATP from ADP in the presence of a proton gradient across the membrane. This chain is ATP synthase epsilon chain, found in Nitrosomonas europaea (strain ATCC 19718 / CIP 103999 / KCTC 2705 / NBRC 14298).